A 317-amino-acid polypeptide reads, in one-letter code: Protein CbxX, plasmid (317 aa).

Residue 85 to 92 (GNPGTGKT) coordinates ATP.

This sequence belongs to the CbxX/CfxQ family.

Functionally, seems to be necessary for the expression of RuBisCO. In Cupriavidus necator (strain ATCC 17699 / DSM 428 / KCTC 22496 / NCIMB 10442 / H16 / Stanier 337) (Ralstonia eutropha), this protein is Protein CbxX, plasmid (cbxXP).